A 224-amino-acid chain; its full sequence is MNRSTRSHKAIVIFSGGQDSTTCLFQAIQEFKRENVEVITFQYGQRHSIELEKAAWIAQNLGIKQTVIDTSVIKAITTNALITEATIKQDGDKPNTFVDGRNALFLLYTAIYAKGQGIQTIFTGVCETDFSGYPDCRDIFIKSMNVTLNLAMDYNFNIRTPLMYLTKKQTWALADQLGAFEYVREHTHTCYLGVEGGCHTCPSCLLREKGLNEYLAEKSGEKNV.

14–24 (FSGGQDSTTCL) is an ATP binding site. Residues cysteine 190, cysteine 198, cysteine 201, and cysteine 204 each contribute to the Zn(2+) site.

Belongs to the QueC family. Requires Zn(2+) as cofactor.

It catalyses the reaction 7-carboxy-7-deazaguanine + NH4(+) + ATP = 7-cyano-7-deazaguanine + ADP + phosphate + H2O + H(+). The protein operates within purine metabolism; 7-cyano-7-deazaguanine biosynthesis. Its function is as follows. Catalyzes the ATP-dependent conversion of 7-carboxy-7-deazaguanine (CDG) to 7-cyano-7-deazaguanine (preQ(0)). The sequence is that of 7-cyano-7-deazaguanine synthase from Haemophilus ducreyi (strain 35000HP / ATCC 700724).